Consider the following 680-residue polypeptide: Chondroitin proteoglycan 4 (680 aa).

Positions 1–18 (MLRVNLLILLCFVPFSLN) are cleaved as a signal peptide. N42, N59, N72, N167, N205, N458, N472, N486, N498, N526, N527, N556, and N604 each carry an N-linked (GlcNAc...) asparagine glycan. The interval 460–680 (TKKAETTKKS…PLTTTLHELY (221 aa)) is disordered. Over residues 484–500 (AANTTAETTKTTSANIT) the composition is skewed to low complexity. Positions 520–530 (SLDTSGNNSTV) are enriched in polar residues. Low complexity-rich tracts occupy residues 633–647 (GEASGEASGEASGEV) and 654–669 (SGYSGESPGENESSGE). O-linked (Xyl...) (chondroitin sulfate) serine glycosylation is found at S640 and S644. N664 carries N-linked (GlcNAc...) asparagine glycosylation.

The polypeptide is Chondroitin proteoglycan 4 (cpg-4) (Caenorhabditis briggsae).